The primary structure comprises 895 residues: DNA mismatch repair protein MutS (895 aa).

Gly-632–Ser-639 contributes to the ATP binding site. The segment at Val-824 to Gln-849 is disordered. Polar residues predominate over residues Asn-837–Gln-849.

This sequence belongs to the DNA mismatch repair MutS family.

This protein is involved in the repair of mismatches in DNA. It is possible that it carries out the mismatch recognition step. This protein has a weak ATPase activity. In Desulforapulum autotrophicum (strain ATCC 43914 / DSM 3382 / VKM B-1955 / HRM2) (Desulfobacterium autotrophicum), this protein is DNA mismatch repair protein MutS.